The following is a 428-amino-acid chain: UDP-N-acetylglucosamine 1-carboxyvinyltransferase 2 (428 aa).

Position 22–23 (Lys-22–Asn-23) interacts with phosphoenolpyruvate. Arg-92 serves as a coordination point for UDP-N-acetyl-alpha-D-glucosamine. The active-site Proton donor is Cys-116. 2-(S-cysteinyl)pyruvic acid O-phosphothioketal is present on Cys-116. UDP-N-acetyl-alpha-D-glucosamine-binding positions include Arg-121–Gln-125, Asp-304, and Ile-326.

Belongs to the EPSP synthase family. MurA subfamily.

It localises to the cytoplasm. It catalyses the reaction phosphoenolpyruvate + UDP-N-acetyl-alpha-D-glucosamine = UDP-N-acetyl-3-O-(1-carboxyvinyl)-alpha-D-glucosamine + phosphate. Its pathway is cell wall biogenesis; peptidoglycan biosynthesis. Functionally, cell wall formation. Adds enolpyruvyl to UDP-N-acetylglucosamine. In Oceanobacillus iheyensis (strain DSM 14371 / CIP 107618 / JCM 11309 / KCTC 3954 / HTE831), this protein is UDP-N-acetylglucosamine 1-carboxyvinyltransferase 2.